Consider the following 352-residue polypeptide: NADP-dependent oxidoreductase RED1 (352 aa).

NADP(+) is bound by residues 166 to 169 (GAVG), Lys192, Tyr208, Asn231, and 285 to 287 (FIV).

This sequence belongs to the NADP-dependent oxidoreductase L4BD family.

Its pathway is mycotoxin biosynthesis. In terms of biological role, NADP-dependent oxidoreductase; part of the Tox1B locus, one of the 2 loci that mediate the biosynthesis of T-toxin, a family of linear polyketides 37 to 45 carbons in length, of which the major component is 41 carbons, and which leads to high virulence to maize. One of the PKSs (PKS1 or PKS2) could synthesize a precursor, used subsequently by the other PKS as starter unit, to add additional carbons. Variability in the length of the final carbon backbone C35-47 could be achieved by varying the number of condensation cycles, or use of different starter or extender units or might be due to decarboxylation of the penultimate product, catalyzed by DEC1. Additional proteins are required for the biosynthesis of T-toxin, including oxidoreductases RED1, RED2, RED3, LAM1 and OXI1, as well as esterase TOX9. In Cochliobolus heterostrophus (strain C4 / ATCC 48331 / race T) (Southern corn leaf blight fungus), this protein is NADP-dependent oxidoreductase RED1.